The primary structure comprises 527 residues: Bifunctional purine biosynthesis protein PurH (527 aa).

The region spanning 1-149 is the MGS-like domain; sequence MASDFLPVRR…KNFARVAVAT (149 aa).

This sequence belongs to the PurH family.

The catalysed reaction is (6R)-10-formyltetrahydrofolate + 5-amino-1-(5-phospho-beta-D-ribosyl)imidazole-4-carboxamide = 5-formamido-1-(5-phospho-D-ribosyl)imidazole-4-carboxamide + (6S)-5,6,7,8-tetrahydrofolate. It catalyses the reaction IMP + H2O = 5-formamido-1-(5-phospho-D-ribosyl)imidazole-4-carboxamide. It functions in the pathway purine metabolism; IMP biosynthesis via de novo pathway; 5-formamido-1-(5-phospho-D-ribosyl)imidazole-4-carboxamide from 5-amino-1-(5-phospho-D-ribosyl)imidazole-4-carboxamide (10-formyl THF route): step 1/1. It participates in purine metabolism; IMP biosynthesis via de novo pathway; IMP from 5-formamido-1-(5-phospho-D-ribosyl)imidazole-4-carboxamide: step 1/1. The chain is Bifunctional purine biosynthesis protein PurH from Xanthomonas oryzae pv. oryzae (strain PXO99A).